A 316-amino-acid polypeptide reads, in one-letter code: Pantothenate kinase (316 aa).

95–102 (GSVAVGKS) serves as a coordination point for ATP.

It belongs to the prokaryotic pantothenate kinase family.

It is found in the cytoplasm. It carries out the reaction (R)-pantothenate + ATP = (R)-4'-phosphopantothenate + ADP + H(+). It participates in cofactor biosynthesis; coenzyme A biosynthesis; CoA from (R)-pantothenate: step 1/5. The polypeptide is Pantothenate kinase (Serratia proteamaculans (strain 568)).